The following is a 56-amino-acid chain: Preprotein translocase subunit SecG (56 aa).

Topologically, residues 1–29 (MAKDKTTLPPTGAGLMRFFDEDTRAIKVS) are cytoplasmic. Residues 30–51 (PKGVIAIVLVLIAFEVFLHLFG) form a helical membrane-spanning segment. Residues 52-56 (PSIFG) are Extracellular-facing.

It belongs to the SEC61-beta family. As to quaternary structure, component of the protein translocase complex. Heterotrimer consisting of alpha (SecY), beta (SecG) and gamma (SecE) subunits. Can form oligomers of the heterotrimer.

The protein localises to the cell membrane. In terms of biological role, involved in protein export. The function of the beta subunit is unknown, but it may be involved in stabilization of the trimeric complex. The protein is Preprotein translocase subunit SecG of Thermococcus gammatolerans (strain DSM 15229 / JCM 11827 / EJ3).